Consider the following 442-residue polypeptide: uncharacterized protein (442 aa).

An N-terminal signal peptide occupies residues 1–23 (MEILLIVLGAVVAGLLCPVQTAA). Disordered stretches follow at residues 36–67 (TSIS…NSSD) and 91–115 (ANET…TNTR). Residues 48–67 (TSSGELSQSTFSSSSTNSSD) are compositionally biased toward low complexity. N-linked (GlcNAc...) asparagine glycans are attached at residues Asn64, Asn92, Asn99, Asn130, Asn174, Asn225, Asn244, Asn346, Asn363, Asn386, and Asn398.

The protein resides in the secreted. This is an uncharacterized protein from Arthroderma benhamiae (strain ATCC MYA-4681 / CBS 112371) (Trichophyton mentagrophytes).